Here is a 288-residue protein sequence, read N- to C-terminus: Protoheme IX farnesyltransferase (288 aa).

9 helical membrane passes run 16 to 36 (VWSL…PYFN), 37 to 57 (LHYI…SMGA), 88 to 108 (INGL…LAAF), 111 to 131 (LYAA…YSYL), 138 to 158 (WNII…WYTV), 162 to 182 (FSIL…IHVW), 210 to 230 (AICI…PAFF), 236 to 256 (VYMI…IVFV), and 265 to 285 (LKLF…VLIF).

This sequence belongs to the UbiA prenyltransferase family. Protoheme IX farnesyltransferase subfamily.

It localises to the cell membrane. The catalysed reaction is heme b + (2E,6E)-farnesyl diphosphate + H2O = Fe(II)-heme o + diphosphate. It participates in porphyrin-containing compound metabolism; heme O biosynthesis; heme O from protoheme: step 1/1. Converts heme B (protoheme IX) to heme O by substitution of the vinyl group on carbon 2 of heme B porphyrin ring with a hydroxyethyl farnesyl side group. The sequence is that of Protoheme IX farnesyltransferase from Thermoplasma acidophilum (strain ATCC 25905 / DSM 1728 / JCM 9062 / NBRC 15155 / AMRC-C165).